A 389-amino-acid polypeptide reads, in one-letter code: 5-hydroxytryptamine receptor 1B (389 aa).

The disordered stretch occupies residues 1–27 (MEETNTHCAPPPPAGSQTGVSQANLSS). At 1-45 (MEETNTHCAPPPPAGSQTGVSQANLSSAPPNCSTEGYIYQDSIAL) the chain is on the extracellular side. Residues 15–27 (GSQTGVSQANLSS) are compositionally biased toward polar residues. Residues Asn24 and Asn31 are each glycosylated (N-linked (GlcNAc...) asparagine). The chain crosses the membrane as a helical span at residues 46 to 71 (PWKVLLILVLALFTLATTLSNAFVIA). Residues 72 to 85 (TVYRTRKLHTPANY) lie on the Cytoplasmic side of the membrane. A helical transmembrane segment spans residues 86–110 (LIASLAVTDLLVSILVMPISTMYTV). Topologically, residues 111–118 (TGRWTLGQ) are extracellular. Residues 119 to 144 (VVCDFWLSSDITCCTASILHLCVIAL) form a helical membrane-spanning segment. A disulfide bond links Cys121 and Cys198. Residues Asp128 and Thr133 each coordinate ergotamine. A DRY motif; important for ligand-induced conformation changes and signaling motif is present at residues 145–147 (DRY). The Cytoplasmic portion of the chain corresponds to 145 to 164 (DRYWAITDAVEYSAKRTPKR). The helical transmembrane segment at 165 to 183 (AAVMIALVWVFSISISLPP) threads the bilayer. The Extracellular portion of the chain corresponds to 184–204 (FFWRQAKAEEEVSDCRVNTDH). Position 200 (Val200) interacts with ergotamine. Residues 205-228 (MLYTVYSTVGAFYFPTLLLIALYG) form a helical membrane-spanning segment. Residues 229 to 314 (RIYVEARSRI…AARERKATKT (86 aa)) are Cytoplasmic-facing. Polar residues predominate over residues 258–271 (DSPGSTSSVTSVNS). Positions 258–281 (DSPGSTSSVTSVNSRAPDVPSESG) are disordered. Residues 315 to 336 (LGIILGAFIVCWLPFFIISLVM) traverse the membrane as a helical segment. Residues 337 to 346 (PICKDACWFH) are Extracellular-facing. The chain crosses the membrane as a helical span at residues 347-369 (LAIFDFFTWLGYLNSLINPIIYT). The NPxxY motif; important for ligand-induced conformation changes and signaling signature appears at 364 to 368 (NPIIY). Topologically, residues 370 to 389 (MSNEDFKQAFHKLIRFKCTG) are cytoplasmic. Residue Cys387 is the site of S-palmitoyl cysteine attachment.

Belongs to the G-protein coupled receptor 1 family. As to quaternary structure, homodimer. Heterodimer with HTR1D. Phosphorylated. Desensitization of the receptor may be mediated by its phosphorylation. Post-translationally, palmitoylated.

It localises to the cell membrane. G-protein coupled receptor for 5-hydroxytryptamine (serotonin). Also functions as a receptor for ergot alkaloid derivatives, various anxiolytic and antidepressant drugs and other psychoactive substances, such as lysergic acid diethylamide (LSD). Ligand binding causes a conformation change that triggers signaling via guanine nucleotide-binding proteins (G proteins) and modulates the activity of downstream effectors, such as adenylate cyclase. HTR1B is coupled to G(i)/G(o) G alpha proteins and mediates inhibitory neurotransmission by inhibiting adenylate cyclase activity. Arrestin family members inhibit signaling via G proteins and mediate activation of alternative signaling pathways. Regulates the release of 5-hydroxytryptamine, dopamine and acetylcholine in the brain, and thereby affects neural activity, nociceptive processing, pain perception, mood and behavior. Besides, plays a role in vasoconstriction of cerebral arteries. The chain is 5-hydroxytryptamine receptor 1B (HTR1B) from Felis catus (Cat).